The following is a 475-amino-acid chain: L-ornithine N(5)-monooxygenase (475 aa).

Residues 65–73 (ERQPEFGWH) and Q84 each bind FAD. A substrate-binding site is contributed by K89. FAD is bound at residue V150. NADP(+) is bound at residue 238-241 (GGQS). Residues 277–280 (NEIF) and N307 each bind substrate. 307–309 (NYG) serves as a coordination point for NADP(+). 446-448 (SLL) is a binding site for FAD. Residue S449 coordinates substrate.

This sequence belongs to the lysine N(6)-hydroxylase/L-ornithine N(5)-oxygenase family. Homotetramer. FAD is required as a cofactor.

It catalyses the reaction L-ornithine + NADPH + O2 = N(5)-hydroxy-L-ornithine + NADP(+) + H2O. The catalysed reaction is L-ornithine + NADH + O2 = N(5)-hydroxy-L-ornithine + NAD(+) + H2O. Its pathway is siderophore biosynthesis. L-ornithine N(5)-monooxygenase; part of the gene cluster that mediates the biosynthesis of hydroxamate-containing siderophores that play a critical role in virulence via intracellular iron acquisition during macrophage infection. SID1 catalyzes the conversion of L-ornithine to N(5)-hydroxyornithine, the first step in the biosynthesis of all hydroxamate-containing siderophores. This is L-ornithine N(5)-monooxygenase from Ajellomyces capsulatus (Darling's disease fungus).